Consider the following 463-residue polypeptide: ATP-dependent protease ATPase subunit HslU (463 aa).

ATP contacts are provided by residues isoleucine 19 and glycine 61–glutamate 66. Residues phenylalanine 154 to lysine 174 are disordered. Aspartate 277, glutamate 341, and arginine 413 together coordinate ATP.

This sequence belongs to the ClpX chaperone family. HslU subfamily. A double ring-shaped homohexamer of HslV is capped on each side by a ring-shaped HslU homohexamer. The assembly of the HslU/HslV complex is dependent on binding of ATP.

The protein resides in the cytoplasm. In terms of biological role, ATPase subunit of a proteasome-like degradation complex; this subunit has chaperone activity. The binding of ATP and its subsequent hydrolysis by HslU are essential for unfolding of protein substrates subsequently hydrolyzed by HslV. HslU recognizes the N-terminal part of its protein substrates and unfolds these before they are guided to HslV for hydrolysis. The sequence is that of ATP-dependent protease ATPase subunit HslU from Bacillus cereus (strain G9842).